We begin with the raw amino-acid sequence, 195 residues long: ATP-dependent Clp protease proteolytic subunit (195 aa).

The active-site Nucleophile is Ser-101. The active site involves His-126.

It belongs to the peptidase S14 family. As to quaternary structure, component of the chloroplastic Clp protease core complex.

The protein resides in the plastid. The protein localises to the chloroplast stroma. It carries out the reaction Hydrolysis of proteins to small peptides in the presence of ATP and magnesium. alpha-casein is the usual test substrate. In the absence of ATP, only oligopeptides shorter than five residues are hydrolyzed (such as succinyl-Leu-Tyr-|-NHMec, and Leu-Tyr-Leu-|-Tyr-Trp, in which cleavage of the -Tyr-|-Leu- and -Tyr-|-Trp bonds also occurs).. Cleaves peptides in various proteins in a process that requires ATP hydrolysis. Has a chymotrypsin-like activity. Plays a major role in the degradation of misfolded proteins. This Cucumis sativus (Cucumber) protein is ATP-dependent Clp protease proteolytic subunit.